A 190-amino-acid polypeptide reads, in one-letter code: Large ribosomal subunit protein eL19 (190 aa).

Disordered regions lie at residues 56–85 (TVHS…KGTK) and 166–190 (NRAA…EAAN). Positions 72–83 (AGRHMGYGKRKG) are enriched in basic residues. Residues 166–184 (NRAARERRQQRLAEKKEAL) are compositionally biased toward basic and acidic residues.

It belongs to the eukaryotic ribosomal protein eL19 family. Component of the large ribosomal subunit. Mature ribosomes consist of a small (40S) and a large (60S) subunit. The 40S subunit contains about 32 different proteins and 1 molecule of RNA (18S). The 60S subunit contains 45 different proteins and 3 molecules of RNA (25S, 5.8S and 5S).

Its subcellular location is the cytoplasm. Functionally, component of the ribosome, a large ribonucleoprotein complex responsible for the synthesis of proteins in the cell. The small ribosomal subunit (SSU) binds messenger RNAs (mRNAs) and translates the encoded message by selecting cognate aminoacyl-transfer RNA (tRNA) molecules. The large subunit (LSU) contains the ribosomal catalytic site termed the peptidyl transferase center (PTC), which catalyzes the formation of peptide bonds, thereby polymerizing the amino acids delivered by tRNAs into a polypeptide chain. The nascent polypeptides leave the ribosome through a tunnel in the LSU and interact with protein factors that function in enzymatic processing, targeting, and the membrane insertion of nascent chains at the exit of the ribosomal tunnel. RPL19A may play a role in the last stages of translation initiation, in particular subunit joining and shedding/releasing factors. This chain is Large ribosomal subunit protein eL19, found in Candida albicans (strain SC5314 / ATCC MYA-2876) (Yeast).